The chain runs to 416 residues: 4-hydroxy-3-methylbut-2-en-1-yl diphosphate synthase (flavodoxin) (416 aa).

Residues Cys-304, Cys-307, Cys-350, and Glu-357 each contribute to the [4Fe-4S] cluster site.

Belongs to the IspG family. Requires [4Fe-4S] cluster as cofactor.

The catalysed reaction is (2E)-4-hydroxy-3-methylbut-2-enyl diphosphate + oxidized [flavodoxin] + H2O + 2 H(+) = 2-C-methyl-D-erythritol 2,4-cyclic diphosphate + reduced [flavodoxin]. Its pathway is isoprenoid biosynthesis; isopentenyl diphosphate biosynthesis via DXP pathway; isopentenyl diphosphate from 1-deoxy-D-xylulose 5-phosphate: step 5/6. Converts 2C-methyl-D-erythritol 2,4-cyclodiphosphate (ME-2,4cPP) into 1-hydroxy-2-methyl-2-(E)-butenyl 4-diphosphate. The polypeptide is 4-hydroxy-3-methylbut-2-en-1-yl diphosphate synthase (flavodoxin) (Rhizobium etli (strain ATCC 51251 / DSM 11541 / JCM 21823 / NBRC 15573 / CFN 42)).